Here is a 314-residue protein sequence, read N- to C-terminus: Acetaldehyde dehydrogenase 2 (314 aa).

15-18 (SGNI) is an NAD(+) binding site. Cysteine 133 (acyl-thioester intermediate) is an active-site residue. Residues 164 to 172 (SAGPGTRQN) and asparagine 289 each bind NAD(+).

Belongs to the acetaldehyde dehydrogenase family.

The enzyme catalyses acetaldehyde + NAD(+) + CoA = acetyl-CoA + NADH + H(+). In Nocardioides sp. (strain ATCC BAA-499 / JS614), this protein is Acetaldehyde dehydrogenase 2.